Here is a 440-residue protein sequence, read N- to C-terminus: Transposon Ty1-A Gag polyprotein (440 aa).

4 stretches are compositionally biased toward polar residues: residues 1-23 (MESQ…SVTS), 48-60 (TKAN…TPAS), 71-93 (SPQT…MMTQ), and 127-152 (QSQF…GNTF). Disordered regions lie at residues 1–93 (MESQ…MMTQ), 126–173 (PQSQ…RPPP), and 352–440 (GSRN…PETY). Residues 153–165 (TDSSSADSDMTST) are compositionally biased toward low complexity. The RNA-binding stretch occupies residues 299 to 401 (NNGIHINNKV…NSKSKTARAH (103 aa)). Residues 402–418 (NVSTSNNSPSTDNDSIS) are compositionally biased toward low complexity. The residue at position 416 (S416) is a Phosphoserine. The segment covering 419–428 (KSTTEPIQLN) has biased composition (polar residues). The segment covering 429 to 440 (NKHDLHLRPETY) has biased composition (basic and acidic residues).

In terms of assembly, homotrimer.

Its subcellular location is the cytoplasm. In terms of biological role, capsid protein (CA) is the structural component of the virus-like particle (VLP), forming the shell that encapsulates the retrotransposons dimeric RNA genome. The particles are assembled from trimer-clustered units and there are holes in the capsid shells that allow for the diffusion of macromolecules. CA also has nucleocapsid-like chaperone activity, promoting primer tRNA(i)-Met annealing to the multipartite primer-binding site (PBS), dimerization of Ty1 RNA and initiation of reverse transcription. This is Transposon Ty1-A Gag polyprotein (TY1A-A) from Saccharomyces cerevisiae (strain ATCC 204508 / S288c) (Baker's yeast).